Consider the following 692-residue polypeptide: Elongation factor G (692 aa).

Positions Ala-8–Leu-282 constitute a tr-type G domain. GTP is bound by residues Ala-17–Thr-24, Asp-81–His-85, and Asn-135–Asp-138.

Belongs to the TRAFAC class translation factor GTPase superfamily. Classic translation factor GTPase family. EF-G/EF-2 subfamily.

It localises to the cytoplasm. Functionally, catalyzes the GTP-dependent ribosomal translocation step during translation elongation. During this step, the ribosome changes from the pre-translocational (PRE) to the post-translocational (POST) state as the newly formed A-site-bound peptidyl-tRNA and P-site-bound deacylated tRNA move to the P and E sites, respectively. Catalyzes the coordinated movement of the two tRNA molecules, the mRNA and conformational changes in the ribosome. The protein is Elongation factor G (fus) of Streptococcus pyogenes serotype M1.